Reading from the N-terminus, the 85-residue chain is ATP synthase subunit c (85 aa).

The next 2 membrane-spanning stretches (helical) occupy residues 10-30 (IAVA…FAVL) and 53-73 (FIIA…ALLF).

This sequence belongs to the ATPase C chain family. As to quaternary structure, F-type ATPases have 2 components, F(1) - the catalytic core - and F(0) - the membrane proton channel. F(1) has five subunits: alpha(3), beta(3), gamma(1), delta(1), epsilon(1). F(0) has three main subunits: a(1), b(2) and c(10-14). The alpha and beta chains form an alternating ring which encloses part of the gamma chain. F(1) is attached to F(0) by a central stalk formed by the gamma and epsilon chains, while a peripheral stalk is formed by the delta and b chains.

The protein resides in the cell inner membrane. Its function is as follows. F(1)F(0) ATP synthase produces ATP from ADP in the presence of a proton or sodium gradient. F-type ATPases consist of two structural domains, F(1) containing the extramembraneous catalytic core and F(0) containing the membrane proton channel, linked together by a central stalk and a peripheral stalk. During catalysis, ATP synthesis in the catalytic domain of F(1) is coupled via a rotary mechanism of the central stalk subunits to proton translocation. In terms of biological role, key component of the F(0) channel; it plays a direct role in translocation across the membrane. A homomeric c-ring of between 10-14 subunits forms the central stalk rotor element with the F(1) delta and epsilon subunits. This is ATP synthase subunit c from Vibrio vulnificus (strain CMCP6).